The primary structure comprises 426 residues: Adenylosuccinate synthetase (426 aa).

Residues 12 to 18 (GDEGKGK) and 40 to 42 (GHT) each bind GTP. The active-site Proton acceptor is the D13. The Mg(2+) site is built by D13 and G40. IMP contacts are provided by residues 13–16 (DEGK), 38–41 (NAGH), T130, R144, Q224, T239, and R303. Catalysis depends on H41, which acts as the Proton donor. Residue 299-305 (TVTNRVR) coordinates substrate. GTP contacts are provided by residues R305, 331 to 333 (KLD), and 413 to 415 (STG).

Belongs to the adenylosuccinate synthetase family. In terms of assembly, homodimer. Mg(2+) serves as cofactor.

The protein localises to the cytoplasm. It catalyses the reaction IMP + L-aspartate + GTP = N(6)-(1,2-dicarboxyethyl)-AMP + GDP + phosphate + 2 H(+). It participates in purine metabolism; AMP biosynthesis via de novo pathway; AMP from IMP: step 1/2. Plays an important role in the de novo pathway of purine nucleotide biosynthesis. Catalyzes the first committed step in the biosynthesis of AMP from IMP. This Anaplasma marginale (strain St. Maries) protein is Adenylosuccinate synthetase.